The following is a 332-amino-acid chain: Cysteine and histidine-rich domain-containing protein 1 (332 aa).

Alanine 2 is modified (N-acetylalanine). Residues 2–77 (ALLCYNRGCG…KPPEPVKPEV (76 aa)) form an interaction with PPP5C region. Cysteine 5, cysteine 10, cysteine 24, histidine 27, cysteine 42, and cysteine 43 together coordinate Zn(2+). CHORD domains lie at 5-64 (CYNR…KGRH) and 157-216 (CKNG…TGKH). The residue at position 47 (threonine 47) is a Phosphothreonine. Serine 51 carries the post-translational modification Phosphoserine. Cysteine 59, histidine 64, cysteine 157, cysteine 162, cysteine 176, histidine 179, cysteine 194, cysteine 195, cysteine 211, and histidine 216 together coordinate Zn(2+). Positions 62–82 (GRHNSEKPPEPVKPEVKTTEK) are disordered. Residues 64-82 (HNSEKPPEPVKPEVKTTEK) are compositionally biased toward basic and acidic residues. The interaction with HSP90AA1 and HSP90AB1 stretch occupies residues 65-316 (NSEKPPEPVK…AEPMQWASLE (252 aa)). A CS domain is found at 227 to 316 (VVPCRHDWHQ…AEPMQWASLE (90 aa)).

Interacts with HSP90AA1, HSP90AB1, PPP5C, ROCK1 and ROCK2.

Its function is as follows. Regulates centrosome duplication, probably by inhibiting the kinase activity of ROCK2. Proposed to act as co-chaperone for HSP90. May play a role in the regulation of NOD1 via a HSP90 chaperone complex. In vitro, has intrinsic chaperone activity. This function may be achieved by inhibiting association of ROCK2 with NPM1. Plays a role in ensuring the localization of the tyrosine kinase receptor EGFR to the plasma membrane, and thus ensures the subsequent regulation of EGFR activity and EGF-induced actin cytoskeleton remodeling. Involved in stress response. Prevents tumorigenesis. This Bos taurus (Bovine) protein is Cysteine and histidine-rich domain-containing protein 1 (CHORDC1).